The primary structure comprises 352 residues: Bifunctional protein FolD 1, mitochondrial (352 aa).

The N-terminal 23 residues, 1–23, are a transit peptide targeting the mitochondrion; that stretch reads MLMIARKALASAHTKAFRLATRD.

It belongs to the tetrahydrofolate dehydrogenase/cyclohydrolase family. As to quaternary structure, homodimer.

The protein localises to the mitochondrion. The catalysed reaction is (6R)-5,10-methylene-5,6,7,8-tetrahydrofolate + NADP(+) = (6R)-5,10-methenyltetrahydrofolate + NADPH. It catalyses the reaction (6R)-5,10-methenyltetrahydrofolate + H2O = (6R)-10-formyltetrahydrofolate + H(+). Its pathway is one-carbon metabolism; tetrahydrofolate interconversion. Its function is as follows. Catalyzes the oxidation of 5,10-methylenetetrahydrofolate to 5,10-methenyltetrahydrofolate and then the hydrolysis of 5,10-methenyltetrahydrofolate to 10-formyltetrahydrofolate. This chain is Bifunctional protein FolD 1, mitochondrial (FOLD1), found in Arabidopsis thaliana (Mouse-ear cress).